Here is a 139-residue protein sequence, read N- to C-terminus: 3-hydroxyacyl-[acyl-carrier-protein] dehydratase FabZ (139 aa).

His-46 is an active-site residue.

The protein belongs to the thioester dehydratase family. FabZ subfamily.

It is found in the cytoplasm. It carries out the reaction a (3R)-hydroxyacyl-[ACP] = a (2E)-enoyl-[ACP] + H2O. Its function is as follows. Involved in unsaturated fatty acids biosynthesis. Catalyzes the dehydration of short chain beta-hydroxyacyl-ACPs and long chain saturated and unsaturated beta-hydroxyacyl-ACPs. The chain is 3-hydroxyacyl-[acyl-carrier-protein] dehydratase FabZ from Petrotoga mobilis (strain DSM 10674 / SJ95).